Consider the following 744-residue polypeptide: Glucosamine inositolphosphorylceramide transferase 1 (744 aa).

A run of 3 helical transmembrane segments spans residues 31 to 51 (FLVA…WLVV), 378 to 398 (SLFG…VGFV), and 460 to 480 (LFFC…VHFL). Residues Asn534, 558–563 (NSLNNR), 579–581 (DDD), Arg609, and 665–669 (FNCED) contribute to the substrate site. Asp581 lines the Mn(2+) pocket. Cys667 and Cys718 form a disulfide bridge. The active site involves Asp669.

The protein belongs to the glycosyltransferase 64 family. Mn(2+) is required as a cofactor.

The protein resides in the membrane. It functions in the pathway sphingolipid metabolism. In terms of biological role, essential protein. Glycosyltransferase that mediates the glycosylation of glycosylinositol phosphorylceramides (GIPCs), the major sphingolipids in the plasma membrane; acts as a HexN(Ac)-specific GIPC sugar transferase. Responsible for the glycosylation of a subgroup of GIPCs found in seeds and pollen that contain GlcNAc and GlcN (GlcN(Ac)). Maybe involved in the maintenance of cell-cell adhesion. The polypeptide is Glucosamine inositolphosphorylceramide transferase 1 (Oryza sativa subsp. indica (Rice)).